Reading from the N-terminus, the 238-residue chain is Orotidine 5'-phosphate decarboxylase (238 aa).

Residues D10, K32, 59 to 68 (DLKLHDIPNT), T122, R184, Q193, G213, and R214 contribute to the substrate site. The active-site Proton donor is K61.

Belongs to the OMP decarboxylase family. Type 1 subfamily. As to quaternary structure, homodimer.

The catalysed reaction is orotidine 5'-phosphate + H(+) = UMP + CO2. Its pathway is pyrimidine metabolism; UMP biosynthesis via de novo pathway; UMP from orotate: step 2/2. Its function is as follows. Catalyzes the decarboxylation of orotidine 5'-monophosphate (OMP) to uridine 5'-monophosphate (UMP). The polypeptide is Orotidine 5'-phosphate decarboxylase (Bacillus cereus (strain AH820)).